Reading from the N-terminus, the 359-residue chain is Guanine nucleotide-binding protein subunit alpha-11 (359 aa).

Residues Cys9 and Cys10 are each lipidated (S-palmitoyl cysteine). The 322-residue stretch at Arg38–Val359 folds into the G-alpha domain. Residues Lys41 to Thr54 are G1 motif. GTP is bound by residues Gly46–Ser53 and Leu180–Arg183. Ser53 serves as a coordination point for Mg(2+). The G2 motif stretch occupies residues Asp178–Thr186. Thr186 is a Mg(2+) binding site. Positions Phe201–Arg210 are G3 motif. Residues Ile270–Asp277 form a G4 motif region. GTP is bound by residues Asn274 to Asp277 and Ala331. Residues Thr329–Thr334 are G5 motif.

This sequence belongs to the G-alpha family. G(q) subfamily. In terms of assembly, g proteins are composed of 3 units; alpha, beta and gamma. The alpha chain contains the guanine nucleotide binding site. Interacts with RGS22. Interacts with NTSR1.

The protein localises to the cell membrane. Its subcellular location is the cytoplasm. It carries out the reaction GTP + H2O = GDP + phosphate + H(+). In terms of biological role, guanine nucleotide-binding proteins (G proteins) function as transducers downstream of G protein-coupled receptors (GPCRs) in numerous signaling cascades. The alpha chain contains the guanine nucleotide binding site and alternates between an active, GTP-bound state and an inactive, GDP-bound state. Signaling by an activated GPCR promotes GDP release and GTP binding. The alpha subunit has a low GTPase activity that converts bound GTP to GDP, thereby terminating the signal. Both GDP release and GTP hydrolysis are modulated by numerous regulatory proteins. Signaling is mediated via phospholipase C-beta-dependent inositol lipid hydrolysis for signal propagation: activates phospholipase C-beta: following GPCR activation, GNA11 activates PLC-beta (PLCB1, PLCB2, PLCB3 or PLCB4), leading to production of diacylglycerol (DAG) and inositol 1,4,5-trisphosphate (IP3). Transduces FFAR4 signaling in response to long-chain fatty acids (LCFAs). Together with GNAQ, required for heart development. In the respiratory epithelium, transmits OXGR1-dependent signals that lead to downstream intracellular Ca(2+) release and mucocilliary clearance of airborne pathogens. The protein is Guanine nucleotide-binding protein subunit alpha-11 (Gna11) of Rattus norvegicus (Rat).